The following is a 106-amino-acid chain: uncharacterized protein (106 aa).

It is found in the mitochondrion. This is an uncharacterized protein from Arabidopsis thaliana (Mouse-ear cress).